The chain runs to 100 residues: Replication restart protein PriB (100 aa).

The SSB domain maps to 1 to 99 (MGFNNLVSLA…LRIQNIQEYK (99 aa)).

Belongs to the PriB family. In terms of assembly, homodimer. Interacts with PriA and DnaT. Component of the replication restart primosome. Primosome assembly occurs via a 'hand-off' mechanism. PriA binds to replication forks, subsequently PriB then DnaT bind; DnaT then displaces ssDNA to generate the helicase loading substrate.

Its function is as follows. Involved in the restart of stalled replication forks, which reloads the replicative helicase on sites other than the origin of replication; the PriA-PriB pathway is the major replication restart pathway. During primosome assembly it facilitates complex formation between PriA and DnaT on DNA; stabilizes PriA on DNA. Stimulates the DNA unwinding activity of PriA helicase. The polypeptide is Replication restart protein PriB (Neisseria meningitidis serogroup B (strain ATCC BAA-335 / MC58)).